The chain runs to 353 residues: 3-isopropylmalate dehydrogenase (353 aa).

NAD(+) is bound at residue 73–86; the sequence is GPQYDTLDRPLRPE. The substrate site is built by arginine 93, arginine 103, arginine 131, and aspartate 220. Aspartate 220, aspartate 244, and aspartate 248 together coordinate Mg(2+). 278 to 290 serves as a coordination point for NAD(+); sequence GSAPDIAGKNLAN.

This sequence belongs to the isocitrate and isopropylmalate dehydrogenases family. LeuB type 1 subfamily. Homodimer. Mg(2+) is required as a cofactor. It depends on Mn(2+) as a cofactor.

The protein localises to the cytoplasm. The catalysed reaction is (2R,3S)-3-isopropylmalate + NAD(+) = 4-methyl-2-oxopentanoate + CO2 + NADH. It functions in the pathway amino-acid biosynthesis; L-leucine biosynthesis; L-leucine from 3-methyl-2-oxobutanoate: step 3/4. In terms of biological role, catalyzes the oxidation of 3-carboxy-2-hydroxy-4-methylpentanoate (3-isopropylmalate) to 3-carboxy-4-methyl-2-oxopentanoate. The product decarboxylates to 4-methyl-2 oxopentanoate. In Thiobacillus denitrificans (strain ATCC 25259 / T1), this protein is 3-isopropylmalate dehydrogenase.